A 100-amino-acid chain; its full sequence is Small ribosomal subunit protein uS14 (100 aa).

This sequence belongs to the universal ribosomal protein uS14 family. As to quaternary structure, part of the 30S ribosomal subunit. Contacts proteins S3 and S10.

Functionally, binds 16S rRNA, required for the assembly of 30S particles and may also be responsible for determining the conformation of the 16S rRNA at the A site. The chain is Small ribosomal subunit protein uS14 from Gloeothece citriformis (strain PCC 7424) (Cyanothece sp. (strain PCC 7424)).